We begin with the raw amino-acid sequence, 590 residues long: Negative elongation factor D (590 aa).

Residues 15 to 43 (FGSAAEWGDEADGGQQEDDYGEGEDDAEV) form a disordered region. Residues 21 to 43 (WGDEADGGQQEDDYGEGEDDAEV) are compositionally biased toward acidic residues.

It belongs to the NELF-D family. The NELF complex is composed of NELFA, NELFB, NELFCD and NELFE; NELFA and NELFCD form a stable subcomplex that binds primarily through NELFCD to the N-terminus of NELFB. Binds RNA which may help to stabilize the NELF complex on nucleic acid. In vitro, the NELFA:NELFCD subcomplex binds to ssDNA and ssRNA in a sequence- and structure-dependent manner. Interacts with ARAF1. Interacts with PCF11. Interacts with NELFB. Interacts with KAT8.

The protein localises to the nucleus. Essential component of the NELF complex, a complex that negatively regulates the elongation of transcription by RNA polymerase II. The NELF complex, which acts via an association with the DSIF complex and causes transcriptional pausing, is counteracted by the P-TEFb kinase complex. This Sus scrofa (Pig) protein is Negative elongation factor D (NELFCD).